A 396-amino-acid chain; its full sequence is Elongation factor Tu (396 aa).

The region spanning 10 to 205 is the tr-type G domain; that stretch reads KPHVNIGTIG…AVDESIPDPV (196 aa). The segment at 19-26 is G1; that stretch reads GHVDHGKT. 19-26 is a binding site for GTP; sequence GHVDHGKT. A Mg(2+)-binding site is contributed by Thr-26. The interval 62 to 66 is G2; it reads GITIN. Residues 83–86 form a G3 region; that stretch reads DAPG. Residues 83 to 87 and 138 to 141 contribute to the GTP site; these read DAPGH and NKAD. The segment at 138–141 is G4; the sequence is NKAD. Positions 175-177 are G5; the sequence is SGL.

It belongs to the TRAFAC class translation factor GTPase superfamily. Classic translation factor GTPase family. EF-Tu/EF-1A subfamily. As to quaternary structure, monomer.

The protein localises to the cytoplasm. It carries out the reaction GTP + H2O = GDP + phosphate + H(+). Its function is as follows. GTP hydrolase that promotes the GTP-dependent binding of aminoacyl-tRNA to the A-site of ribosomes during protein biosynthesis. The polypeptide is Elongation factor Tu (Nocardia farcinica (strain IFM 10152)).